Here is a 102-residue protein sequence, read N- to C-terminus: Small ribosomal subunit protein uS10 (102 aa).

Belongs to the universal ribosomal protein uS10 family. In terms of assembly, part of the 30S ribosomal subunit.

Involved in the binding of tRNA to the ribosomes. The protein is Small ribosomal subunit protein uS10 of Beijerinckia indica subsp. indica (strain ATCC 9039 / DSM 1715 / NCIMB 8712).